The sequence spans 503 residues: GMP synthase [glutamine-hydrolyzing] (503 aa).

The Glutamine amidotransferase type-1 domain maps to 3-189 (PVLVVDFGSQ…AFLSSFAAPN (187 aa)). Catalysis depends on C80, which acts as the Nucleophile. Residues H165 and E167 contribute to the active site. The GMPS ATP-PPase domain maps to 190–380 (WDPEQTICGT…LGIPKHIVHR (191 aa)). An ATP-binding site is contributed by 217–223 (SGGVDSV).

As to quaternary structure, homodimer.

It carries out the reaction XMP + L-glutamine + ATP + H2O = GMP + L-glutamate + AMP + diphosphate + 2 H(+). It participates in purine metabolism; GMP biosynthesis; GMP from XMP (L-Gln route): step 1/1. Catalyzes the synthesis of GMP from XMP. In Tropheryma whipplei (strain TW08/27) (Whipple's bacillus), this protein is GMP synthase [glutamine-hydrolyzing].